The chain runs to 195 residues: ATP-dependent Clp protease proteolytic subunit (195 aa).

The Nucleophile role is filled by Ser96. Residue His121 is part of the active site.

The protein belongs to the peptidase S14 family. As to quaternary structure, fourteen ClpP subunits assemble into 2 heptameric rings which stack back to back to give a disk-like structure with a central cavity, resembling the structure of eukaryotic proteasomes.

The protein localises to the cytoplasm. It catalyses the reaction Hydrolysis of proteins to small peptides in the presence of ATP and magnesium. alpha-casein is the usual test substrate. In the absence of ATP, only oligopeptides shorter than five residues are hydrolyzed (such as succinyl-Leu-Tyr-|-NHMec, and Leu-Tyr-Leu-|-Tyr-Trp, in which cleavage of the -Tyr-|-Leu- and -Tyr-|-Trp bonds also occurs).. Cleaves peptides in various proteins in a process that requires ATP hydrolysis. Has a chymotrypsin-like activity. Plays a major role in the degradation of misfolded proteins. The sequence is that of ATP-dependent Clp protease proteolytic subunit from Elusimicrobium minutum (strain Pei191).